The primary structure comprises 216 residues: Deoxyribose-phosphate aldolase (216 aa).

The Proton donor/acceptor role is filled by Asp89. The Schiff-base intermediate with acetaldehyde role is filled by Lys152. Lys181 serves as the catalytic Proton donor/acceptor.

This sequence belongs to the DeoC/FbaB aldolase family. DeoC type 1 subfamily.

It is found in the cytoplasm. The enzyme catalyses 2-deoxy-D-ribose 5-phosphate = D-glyceraldehyde 3-phosphate + acetaldehyde. It functions in the pathway carbohydrate degradation; 2-deoxy-D-ribose 1-phosphate degradation; D-glyceraldehyde 3-phosphate and acetaldehyde from 2-deoxy-alpha-D-ribose 1-phosphate: step 2/2. Functionally, catalyzes a reversible aldol reaction between acetaldehyde and D-glyceraldehyde 3-phosphate to generate 2-deoxy-D-ribose 5-phosphate. This Clostridium tetani (strain Massachusetts / E88) protein is Deoxyribose-phosphate aldolase.